The chain runs to 667 residues: tRNA uridine 5-carboxymethylaminomethyl modification enzyme MnmG (667 aa).

Residue 13-18 coordinates FAD; sequence GGGHAG. An NAD(+)-binding site is contributed by 280-294; sequence GPRYCPSVEDKINRF.

It belongs to the MnmG family. As to quaternary structure, homodimer. Heterotetramer of two MnmE and two MnmG subunits. FAD is required as a cofactor.

It is found in the cytoplasm. Its function is as follows. NAD-binding protein involved in the addition of a carboxymethylaminomethyl (cmnm) group at the wobble position (U34) of certain tRNAs, forming tRNA-cmnm(5)s(2)U34. The protein is tRNA uridine 5-carboxymethylaminomethyl modification enzyme MnmG of Polaromonas naphthalenivorans (strain CJ2).